A 372-amino-acid chain; its full sequence is Sesquiterpene synthase Agr9 (372 aa).

4 residues coordinate Mg(2+): Asp87, Asn225, Ser229, and Glu233. The short motif at 87-91 (DEYTD) is the DDXXD motif element. Positions 314 and 315 each coordinate (2E,6E)-farnesyl diphosphate.

Belongs to the terpene synthase family. Mg(2+) is required as a cofactor.

The catalysed reaction is (2E,6E)-farnesyl diphosphate = gamma-muurolene + diphosphate. It catalyses the reaction (2E,6E)-farnesyl diphosphate = delta-cadinene + diphosphate. Its function is as follows. Terpene cyclase that catalyzes the cyclization of farnesyl diphosphate (FPP) to various sesquiterpenes, including gamma-muurolene, beta-cadinene and delta-cadinene. This chain is Sesquiterpene synthase Agr9, found in Cyclocybe aegerita (Black poplar mushroom).